The chain runs to 2564 residues: Highly reducing polyketide synthase 40 (2564 aa).

Residues 8 to 432 (PEPIAIIGMS…GTNAHVIVDR (425 aa)) form the Ketosynthase family 3 (KS3) domain. Active-site for beta-ketoacyl synthase activity residues include C181, H317, and H358. The tract at residues 435 to 482 (EHNHSNGTNGTNGTHHHNGTNGSNGNGTNGTNGTNGTDGFHDTESISD) is disordered. The span at 439–455 (SNGTNGTNGTHHHNGTN) shows a compositional bias: low complexity. Residues 473-482 (GFHDTESISD) show a composition bias toward basic and acidic residues. Residues 580–914 (YVFGGQGAQY…SAAENMLRTL (335 aa)) form a malonyl-CoA:ACP transacylase (MAT) domain region. The segment at 973–1113 (HELLGNLSAD…GRIRAVVDQG (141 aa)) is N-terminal hotdog fold. Residues 973–1280 (HELLGNLSAD…GLRTAQLPSD (308 aa)) form a dehydratase (DH) domain region. Residues 973 to 1283 (HELLGNLSAD…TAQLPSDVVN (311 aa)) enclose the PKS/mFAS DH domain. The active-site Proton acceptor; for dehydratase activity is the H1005. Residues 1130-1283 (AASVPHHITS…TAQLPSDVVN (154 aa)) are C-terminal hotdog fold. The active-site Proton donor; for dehydratase activity is D1199. A methyltransferase (CMet) domain region spans residues 1451–1556 (LEVGGGTASA…RQLLRPGGTL (106 aa)). Residues 1854–2167 (GLLETFRWVD…AGKHMGKVIL (314 aa)) form an enoyl reductase (ER) domain region. Positions 2191-2370 (ATYLLVGGFG…SFAIDVGVVS (180 aa)) are ketoreductase (KR) domain. Positions 2472 to 2549 (EALDAVGQAV…ELIHLVAGKS (78 aa)) constitute a Carrier domain. O-(pantetheine 4'-phosphoryl)serine is present on S2509.

The protein operates within secondary metabolite biosynthesis. Its function is as follows. Highly reducing polyketide synthase; part of the gene cluster that mediates the biosynthesis of the lipopeptides W493 A and B. W493 A and B consist of six amino acid residues D-allo-thr, L-Ala, D-Ala, L-Gln, D-Tyr, and L-Val/L-Ile linked to a 3-hydroxy-4-methyltetradecanoic acid polyketide chain. The biosynthesis starts with formation of the linear polyketide chain by the highly reducing polyketide synthase PKS40. The gene cluster contains a putative acyl-CoA ligase (FPSE_09184) for formation of a CoA thioester polyketide. The thiol bond could be hydrolyzed by the putative thioesterase (FPSE_09186) and then accepted by the first T domain in module 1 of NRPS32. The second T domain is responsible for accepting a threonine, which is adenylated by the A domain and epimerized to the D-allo-threonine formed by the E domain. The five successive modules incorporate Ala, Ala, Gln, Tyr, and Val/Ile into the final product, which is released by cyclization. This is Highly reducing polyketide synthase 40 from Fusarium pseudograminearum (strain CS3096) (Wheat and barley crown-rot fungus).